The primary structure comprises 21 residues: Granulitoxin (21 aa).

Positions 1–21 (AKTGILDSDGPTVAGNSLSGT) are disordered.

The protein localises to the secreted. The protein resides in the nematocyst. Functionally, injection into mice produces severe neurotoxic effects such as circular movements, aggressive behavior, dyspnea, tonic-clonic convulsion and death. This is Granulitoxin from Bunodosoma cangicum (Sea anemone).